Here is a 509-residue protein sequence, read N- to C-terminus: Tyrosine-protein kinase Lck (509 aa).

A lipid anchor (N-myristoyl glycine) is attached at G2. An interactions with CD4 and CD8 region spans residues 2–72 (GCGCSSHPED…DNLVIALHSY (71 aa)). Residues C3 and C5 are each lipidated (S-palmitoyl cysteine). One can recognise an SH3 domain in the interval 61 to 121 (LQDNLVIALH…PFNFVAKANS (61 aa)). K99 participates in a covalent cross-link: Glycyl lysine isopeptide (Lys-Gly) (interchain with G-Cter in ubiquitin). At S102 the chain carries Phosphoserine. Residues 127–224 (WFFKNLSRKD…GLCTRLSRPC (98 aa)) enclose the SH2 domain. An interaction with PTPRH region spans residues 154 to 242 (RESESTAGSF…WWEDEWEVPR (89 aa)). The residue at position 159 (T159) is a Phosphothreonine. S162 bears the Phosphoserine mark. At Y192 the chain carries Phosphotyrosine. S194 is subject to Phosphoserine. The region spanning 245 to 498 (LKLVERLGAG…YLRSVLEDFF (254 aa)) is the Protein kinase domain. ATP contacts are provided by residues 251 to 259 (LGAGQFGEV) and K273. K276 is covalently cross-linked (Glycyl lysine isopeptide (Lys-Gly) (interchain with G-Cter in ubiquitin)). D364 (proton acceptor) is an active-site residue. Residue Y394 is modified to Phosphotyrosine; by autocatalysis. The residue at position 505 (Y505) is a Phosphotyrosine; by CSK.

The protein belongs to the protein kinase superfamily. Tyr protein kinase family. SRC subfamily. As to quaternary structure, binds to the cytoplasmic domain of cell surface receptors, such as AXL, CD2, CD4, CD5, CD8, CD44, CD45 and CD122. Also binds to effector molecules, such as PI4K, VAV1, RASA1, FYB1 and to other protein kinases including CDK1, RAF1, ZAP70 and SYK. Binds to phosphatidylinositol 3'-kinase (PI3K) from T-lymphocytes through its SH3 domain and to the tyrosine phosphorylated form of KHDRBS1/p70 through its SH2 domain. This interaction inhibits its tyrosine-kinase activity. Interacts with SQSTM1. Interacts with phosphorylated LIME1. Interacts with CBLB and PTPRH. Interacts with RUNX3. Forms a signaling complex with EPHA1, PTK2B and PI3-KINASE; upon activation by EFNA1 which may regulate T-lymphocyte migration. Associates with ZAP70 and RHOH; these interactions allow LCK-mediated RHOH and CD3 subunit phosphorylation in the presence of functional ZAP70. Interacts with UNC119; this interaction plays a crucial role in activation of LCK. Interacts with CEACAM1 (via cytoplasmic domain); mediates CEACAM1 phosphorylation resulting in PTPN6 recruitment that dephosphorylates TCR stimulation-induced CD247 and ZAP70. Interacts with CD160. Interacts with CD48. In terms of assembly, (Microbial infection) Interacts with herpes simplex virus 1 UL46; this interaction activates LCK. (Microbial infection) Interacts with HIV-1 Nef through its SH3 domain. In terms of processing, autophosphorylated on Tyr-394, increasing enzymatic activity, this site is dephosphorylated by PTN22. Phosphorylated on Tyr-505 by CSK, decreasing activity. Dephosphorylated by PTPRC/CD45. Dephosphorylation at Tyr-394 by PTPN2 negatively regulates T-cell receptor signaling. Dephosphorylation at Tyr-394 by DUSP22 negatively regulates T-cell receptor signaling. Myristoylation is required prior to palmitoylation. Post-translationally, palmitoylation regulates association with the plasma membrane and could be mediated by ZDHHC2. In terms of processing, 'Lys-63'-linked ubiquitinated at Lys-99 and Lys-276 by UBR2; this modification is required for autophosphorylation at Tyr-394. As to expression, expressed specifically in lymphoid cells.

It is found in the cell membrane. It localises to the cytoplasm. The protein resides in the cytosol. The enzyme catalyses L-tyrosyl-[protein] + ATP = O-phospho-L-tyrosyl-[protein] + ADP + H(+). With respect to regulation, the relative activities of the inhibitory tyrosine-protein kinase CSK and the activating tyrosine-protein phosphatase PTPRC/CD45 determine the level of LCK activity. These interactions allow rapid and efficient activation of LCK in response to TCR stimulation. In terms of biological role, non-receptor tyrosine-protein kinase that plays an essential role in the selection and maturation of developing T-cells in the thymus and in the function of mature T-cells. Plays a key role in T-cell antigen receptor (TCR)-linked signal transduction pathways. Constitutively associated with the cytoplasmic portions of the CD4 and CD8 surface receptors. Association of the TCR with a peptide antigen-bound MHC complex facilitates the interaction of CD4 and CD8 with MHC class II and class I molecules, respectively, thereby recruiting the associated LCK protein to the vicinity of the TCR/CD3 complex. LCK then phosphorylates tyrosine residues within the immunoreceptor tyrosine-based activation motifs (ITAM) of the cytoplasmic tails of the TCR-gamma chains and CD3 subunits, initiating the TCR/CD3 signaling pathway. Once stimulated, the TCR recruits the tyrosine kinase ZAP70, that becomes phosphorylated and activated by LCK. Following this, a large number of signaling molecules are recruited, ultimately leading to lymphokine production. LCK also contributes to signaling by other receptor molecules. Associates directly with the cytoplasmic tail of CD2, which leads to hyperphosphorylation and activation of LCK. Also plays a role in the IL2 receptor-linked signaling pathway that controls the T-cell proliferative response. Binding of IL2 to its receptor results in increased activity of LCK. Is expressed at all stages of thymocyte development and is required for the regulation of maturation events that are governed by both pre-TCR and mature alpha beta TCR. Phosphorylates other substrates including RUNX3, PTK2B/PYK2, the microtubule-associated protein MAPT, RHOH or TYROBP. Interacts with FYB2. This Homo sapiens (Human) protein is Tyrosine-protein kinase Lck (LCK).